The sequence spans 123 residues: MTGTGRTVTRVDLCEAVYQKVGLSRTESSAFVELVLKEITDCLEKGETVKLSSFGSFLVRQKGQRIGRNPKTGTEVPISPRRVMVFKPSAILKQRINANGSAPSMSSSASAVDDDKSESASRT.

Residues 97–123 are disordered; it reads NANGSAPSMSSSASAVDDDKSESASRT. Positions 98–111 are enriched in low complexity; sequence ANGSAPSMSSSASA. Positions 113–123 are enriched in basic and acidic residues; sequence DDDKSESASRT.

This sequence belongs to the bacterial histone-like protein family. Heterodimer of an alpha and a beta chain.

This protein is one of the two subunits of integration host factor, a specific DNA-binding protein that functions in genetic recombination as well as in transcriptional and translational control. The chain is Integration host factor subunit alpha from Rhodopseudomonas palustris (strain BisB5).